We begin with the raw amino-acid sequence, 654 residues long: RING finger protein 112 (654 aa).

The RING-type zinc finger occupies 80–121 (CSICLERLREPISLDCGHDFCIRCFSTHRIPGCELPCCPECR). Positions 154-654 (AVRAERLLLV…GDREPLLQEE (501 aa)) are interaction with ZBTB16. The region spanning 189 to 420 (DTPVCLLAVL…YILDVLSTAP (232 aa)) is the GB1/RHD3-type G domain. Residue 340–341 (RD) participates in GTP binding. 2 consecutive transmembrane segments (helical) span residues 570–590 (LAAV…GVVG) and 603–623 (GMVA…GGGV).

It belongs to the TRAFAC class dynamin-like GTPase superfamily. GB1/RHD3 GTPase family. GB1 subfamily. As to quaternary structure, self-associates. Interacts with SP1 in an oxidative stress-regulated manner. Interacts with SIGMAR1 in an oxidative stress-regulated manner. Interacts with ZBTB16 (via C2H2-type zinc finger domains 1 and 2). In terms of processing, auto-ubiquitinated. Expressed in most of the brain areas, including cortex, striatum, hippocampus, thalamus, and cerebellum (at protein level). Expressed in lateral amygdaloid nucleus, and ventromedial hypothalamus. Also expressed strongly in the marginal zone of brain vesicles, optic stalk, and cartilage primordium.

The protein resides in the membrane. Its subcellular location is the cytoplasm. The protein localises to the nucleus. It localises to the nuclear body. It is found in the nucleoplasm. The protein resides in the endosome. Its subcellular location is the cytoplasmic vesicle. The protein localises to the secretory vesicle. It localises to the synaptic vesicle. It is found in the postsynaptic density. The protein resides in the perikaryon. Its subcellular location is the cell projection. The protein localises to the neuron projection. It carries out the reaction S-ubiquitinyl-[E2 ubiquitin-conjugating enzyme]-L-cysteine + [acceptor protein]-L-lysine = [E2 ubiquitin-conjugating enzyme]-L-cysteine + N(6)-ubiquitinyl-[acceptor protein]-L-lysine.. It participates in protein modification; protein ubiquitination. In terms of biological role, E3 ubiquitin-protein ligase that plays an important role in neuronal differentiation, including neurogenesis and gliogenesis, during brain development. During embryonic development initiates neuronal differentiation by inducing cell cycle arrest at the G0/G1 phase through up-regulation of cell-cycle regulatory proteins. Plays a role not only in the fetal period during the development of the nervous system, but also in the adult brain, where it is involved in the maintenance of neural functions and protection of the nervous tissue cells from oxidative stress-induced damage. Exhibits GTPase and E3 ubiquitin-protein ligase activities. Regulates dendritic spine density and synaptic neurotransmission; its ability to hydrolyze GTP is involved in the maintenance of dendritic spine density. The protein is RING finger protein 112 (Rnf112) of Mus musculus (Mouse).